The following is a 131-amino-acid chain: Small ribosomal subunit protein uS8 (131 aa).

It belongs to the universal ribosomal protein uS8 family. Part of the 30S ribosomal subunit. Contacts proteins S5 and S12.

In terms of biological role, one of the primary rRNA binding proteins, it binds directly to 16S rRNA central domain where it helps coordinate assembly of the platform of the 30S subunit. The protein is Small ribosomal subunit protein uS8 of Dehalococcoides mccartyi (strain CBDB1).